The primary structure comprises 701 residues: MEETIRKGSEVEVSSTEEGFADAWFRGILQENPTKSGRKKLRVRYLTLLNDDALSPLIENIEPRFIRPVPPENEYNGIVLEEGTVVDADHKDGWWTGVIIKKLENGKFWVYYDSPPDIIEFERNQLRPHLRWSGWKWLRPDIQELDKSMFSSGTMAEVSTIVDKAEVAWFPAMIIKEIEVDGEKKFIVKDCNKHLSFSGDEARTNSTIDSSRVRPTPPPFPVEKYELMDRVEVFRGSVWRQGLVRGVLDHNCYMVCLVVTKEEPVVKHSDLRPCKVWEDGVWQDGPKQTPVIETPSNVMKTKPMRSCSGAKSMTPKRTTKHARRSLNLEKSAETLTKAESRAATGELRSKRANDVINDNTPLVITPQVKPIASVEPVTPSRVRTATPLKQTKADTQGKSSPKKTLEPMRDENGLENSTRQKVLEEKNSEKKGRKRKRQEEHNSDLKETDESCNGQMAEINDTSSICNDVDDQPLAAWINLPTETSIDHSPIVVNNAAIATDVEERQANDTLMILPFAKKSPFWKMYETQEVCKIAPQSPHFSPLFEAKEELREWTAVGMMVSFYGLLEEVKNLQLDVSPSTLGSLSCSFAELEKHGFDVAAPQSRINKMLSLQDERAKKAEERKGLEKKIEAGEIEGHTYEEEMAELELKILELKRQQVVAKEMKEATDKVTSGMKSYAEMINQEIEDLRLEFQSTASAPW.

Disordered stretches follow at residues 299–353 and 374–452; these read MKTK…KRAN and VEPV…DESC. The segment covering 326-340 has biased composition (basic and acidic residues); sequence LNLEKSAETLTKAES. A compositionally biased stretch (polar residues) spans 381–399; that stretch reads RVRTATPLKQTKADTQGKS. Basic and acidic residues-rich tracts occupy residues 403–412, 421–430, and 437–449; these read KTLEPMRDEN, KVLEEKNSEK, and RQEE…KETD. A DUF724 domain is found at 514-700; the sequence is LPFAKKSPFW…LEFQSTASAP (187 aa). The stretch at 626–670 forms a coiled coil; it reads LEKKIEAGEIEGHTYEEEMAELELKILELKRQQVVAKEMKEATDK.

In terms of tissue distribution, expressed in roots, stems and flowers.

The protein resides in the nucleus. In terms of biological role, may be involved in the polar growth of plant cells via transportation of RNAs. The protein is DUF724 domain-containing protein 6 of Arabidopsis thaliana (Mouse-ear cress).